Consider the following 1022-residue polypeptide: Sodium-dependent transporter snf-12 (1022 aa).

At 1-165 (MNGEWKSALR…RRELWRTQKD (165 aa)) the chain is on the cytoplasmic side. A helical membrane pass occupies residues 166-185 (FFLSCLGFMVGVGHTMRFPA). At 186-192 (KVYQHGG) the chain is on the extracellular side. Residues 193–213 (GVFFIPYLFSLIFFGLPLVFL) traverse the membrane as a helical segment. The Cytoplasmic segment spans residues 214–241 (HLSLGQYTGQAANTAFQRLMPIGSGVGW). Residues 242–262 (ALVVIAIPVAVYYNIIVAWAI) traverse the membrane as a helical segment. The Extracellular portion of the chain corresponds to 263–337 (HYFFQSAKGL…DFALGPLQSH (75 aa)). The helical transmembrane segment at 338 to 358 (LVLSLAAAWLLVFFGVFKGLG) threads the bilayer. Position 359 (S359) is a topological domain, cytoplasmic. A helical transmembrane segment spans residues 360–380 (IAQTMNVTATVPYLLLSILLL). Residues 381–412 (RGISLPGANKGLTFLFTVDSTKLWKWQIWKSA) lie on the Extracellular side of the membrane. Residues 413–433 (AEQVFYELGIDAGPLISMAAF) form a helical membrane-spanning segment. Residues 434 to 444 (SRYRNNIYRDS) lie on the Cytoplasmic side of the membrane. The helical transmembrane segment at 445-465 (VLLVIMDALTSCLSGMVIFSF) threads the bilayer. The Extracellular portion of the chain corresponds to 466 to 498 (VGFIASESNSNVNDVLKHDPLYLSFTVYPGVTS). Residues 499–519 (FMYWGGLWATLFFGMLVLAAI) form a helical membrane-spanning segment. The Cytoplasmic segment spans residues 520-550 (DAEFAWLEMIASAFMNHFSMKNKAVENRLLA). The helical transmembrane segment at 551 to 571 (FLCLAGFFLGLPLCAQGGIFV) threads the bilayer. Residues 572 to 584 (FHAIENLNANWNS) are Extracellular-facing. Residues 585–605 (FSLALLSVAIVCYVYGIDNYL) traverse the membrane as a helical segment. Residues 606–641 (TDISAMLRVPRIQISKATRLKEKLIYFFGPGGIYIK) lie on the Cytoplasmic side of the membrane. The helical transmembrane segment at 642-662 (FSLCFICPVILTVLLVASVLG) threads the bilayer. Residues 663 to 677 (YQRISFAGRPIPIDY) are Extracellular-facing. Residues 678-698 (EIVAWIVMIGPLLVVPLVAFM) traverse the membrane as a helical segment. Over 699–1022 (QIRQIRNEGK…RPKPIDMPPK (324 aa)) the chain is Cytoplasmic. Disordered stretches follow at residues 867–948 (RIPN…SSDD) and 995–1022 (IYDQ…MPPK). Residues 893 to 907 (SDPPVPTSPLPPPPK) are compositionally biased toward pro residues. Low complexity predominate over residues 933 to 943 (DDSPSISNSSD).

Belongs to the sodium:neurotransmitter symporter (SNF) (TC 2.A.22) family. May interact with STAT family transcription factor sta-2; the interaction is probably direct.

Its subcellular location is the membrane. It is found in the cytoplasm. It localises to the vesicle. In terms of biological role, probably mediates sodium-dependent uptake of unknown small molecule(s). By positively modulating expression, in the epidermis, of antimicrobial peptides such as nlp-29, plays a role in resistance to fungal infection and in the response to physical wounding and phorbol ester PMA treatment. Role in response to wounding of the epidermis may be facilitated by recruitment of snf-12 to the wound site by microtubule-dependent vesicle trafficking. Functions cell autonomously in the epidermis, in concert with STAT transcription factor sta-2, probably acting at vesicular membranes, downstream of a p38 MAPK/pmk-1 pathway. In Caenorhabditis elegans, this protein is Sodium-dependent transporter snf-12.